The primary structure comprises 443 residues: Xaa-Pro dipeptidase (443 aa).

Mn(2+)-binding residues include Asp246, Asp257, His339, Glu384, and Glu423.

It belongs to the peptidase M24B family. Bacterial-type prolidase subfamily. Requires Mn(2+) as cofactor.

The catalysed reaction is Xaa-L-Pro dipeptide + H2O = an L-alpha-amino acid + L-proline. Its function is as follows. Splits dipeptides with a prolyl residue in the C-terminal position. This is Xaa-Pro dipeptidase from Klebsiella pneumoniae subsp. pneumoniae (strain ATCC 700721 / MGH 78578).